The following is a 357-amino-acid chain: Phosphoribosylformylglycinamidine cyclo-ligase (357 aa).

It belongs to the AIR synthase family.

The protein localises to the cytoplasm. It catalyses the reaction 2-formamido-N(1)-(5-O-phospho-beta-D-ribosyl)acetamidine + ATP = 5-amino-1-(5-phospho-beta-D-ribosyl)imidazole + ADP + phosphate + H(+). The protein operates within purine metabolism; IMP biosynthesis via de novo pathway; 5-amino-1-(5-phospho-D-ribosyl)imidazole from N(2)-formyl-N(1)-(5-phospho-D-ribosyl)glycinamide: step 2/2. This Rhizobium etli (strain CIAT 652) protein is Phosphoribosylformylglycinamidine cyclo-ligase.